The primary structure comprises 263 residues: uncharacterized protein (263 aa).

It belongs to the flavoredoxin family. Requires FMN as cofactor.

This is an uncharacterized protein from Aeropyrum pernix (strain ATCC 700893 / DSM 11879 / JCM 9820 / NBRC 100138 / K1).